The following is a 468-amino-acid chain: Efflux pump azaK (468 aa).

The interval 1 to 30 (MTVHPPAVADETSPLLPSQDGPGHNGIVPA) is disordered. 6 consecutive transmembrane segments (helical) span residues 43–65 (QVAL…FPFV), 80–100 (VGFY…MLMI), 112–132 (KPVL…FGFS), 135–155 (LGQM…VVTV), 174–194 (YFSL…GALC), and 207–227 (LPTV…LMFV). A glycan (N-linked (GlcNAc...) asparagine) is linked at asparagine 228. 6 consecutive transmembrane segments (helical) span residues 257 to 277 (VLPV…YTAV), 296 to 316 (FYIS…LVLV), 329 to 349 (ILRG…GASV), 357 to 377 (VAFW…AMQL), 387 to 407 (VSPS…IISF), and 429 to 449 (PGFY…AFTL).

This sequence belongs to the major facilitator superfamily.

The protein localises to the cell membrane. Its function is as follows. Efflux pump that might be required for efficient secretion of azaphilones. In Aspergillus niger (strain ATCC 1015 / CBS 113.46 / FGSC A1144 / LSHB Ac4 / NCTC 3858a / NRRL 328 / USDA 3528.7), this protein is Efflux pump azaK.